Consider the following 190-residue polypeptide: Xanthine phosphoribosyltransferase (190 aa).

Xanthine is bound by residues Leu-20 and Asn-27. 128 to 132 (ANGKA) serves as a coordination point for 5-phospho-alpha-D-ribose 1-diphosphate. Residue Lys-156 participates in xanthine binding.

The protein belongs to the purine/pyrimidine phosphoribosyltransferase family. Xpt subfamily. Homodimer.

The protein resides in the cytoplasm. The enzyme catalyses XMP + diphosphate = xanthine + 5-phospho-alpha-D-ribose 1-diphosphate. The protein operates within purine metabolism; XMP biosynthesis via salvage pathway; XMP from xanthine: step 1/1. Functionally, converts the preformed base xanthine, a product of nucleic acid breakdown, to xanthosine 5'-monophosphate (XMP), so it can be reused for RNA or DNA synthesis. In Pseudomonas fluorescens (strain ATCC BAA-477 / NRRL B-23932 / Pf-5), this protein is Xanthine phosphoribosyltransferase.